Consider the following 730-residue polypeptide: 1,4-alpha-glucan branching enzyme GlgB (730 aa).

Residue Asp-405 is the Nucleophile of the active site. Glu-458 functions as the Proton donor in the catalytic mechanism.

This sequence belongs to the glycosyl hydrolase 13 family. GlgB subfamily. Monomer.

The enzyme catalyses Transfers a segment of a (1-&gt;4)-alpha-D-glucan chain to a primary hydroxy group in a similar glucan chain.. It participates in glycan biosynthesis; glycogen biosynthesis. Catalyzes the formation of the alpha-1,6-glucosidic linkages in glycogen by scission of a 1,4-alpha-linked oligosaccharide from growing alpha-1,4-glucan chains and the subsequent attachment of the oligosaccharide to the alpha-1,6 position. This is 1,4-alpha-glucan branching enzyme GlgB from Haemophilus influenzae (strain PittGG).